The sequence spans 349 residues: tRNA pseudouridine synthase D (349 aa).

Residue F27 coordinates substrate. Residue D80 is the Nucleophile of the active site. N129 lines the substrate pocket. Residues 155–303 enclose the TRUD domain; it reads GVPNYFGAQR…VEASRRAMLL (149 aa). Residue F329 participates in substrate binding.

This sequence belongs to the pseudouridine synthase TruD family.

The enzyme catalyses uridine(13) in tRNA = pseudouridine(13) in tRNA. In terms of biological role, responsible for synthesis of pseudouridine from uracil-13 in transfer RNAs. The chain is tRNA pseudouridine synthase D from Salmonella choleraesuis (strain SC-B67).